A 164-amino-acid chain; its full sequence is CASP-like protein 1C2 (164 aa).

The Cytoplasmic segment spans residues 1–8 (MAVELKKV). Residues 9–29 (FSTILRFLALAATVVAVIVMI) traverse the membrane as a helical segment. The Extracellular segment spans residues 30 to 53 (RSHDSAIVLNLTFSAKYNNTPAFK). Asn-39 is a glycosylation site (N-linked (GlcNAc...) asparagine). Residues 54 to 74 (YFVIAEGIASVYTIIVIFLWS) traverse the membrane as a helical segment. Topologically, residues 75–80 (KGLLGR) are cytoplasmic. Residues 81 to 101 (LIVILDMVTTVLLTSSISAAL) traverse the membrane as a helical segment. The Extracellular segment spans residues 102 to 129 (AIAQVGKKGNSHAGWLPVCGQVPKFCDQ). Residues 130–150 (AIIALVAGFVAAIVYFMLLLC) traverse the membrane as a helical segment. Residues 151 to 164 (SLHAVLTPIFAVKP) are Cytoplasmic-facing.

The protein belongs to the Casparian strip membrane proteins (CASP) family. Homodimer and heterodimers.

Its subcellular location is the cell membrane. The sequence is that of CASP-like protein 1C2 from Ricinus communis (Castor bean).